The following is a 95-amino-acid chain: U8-barytoxin-Tl1a (95 aa).

The N-terminal stretch at 1–21 (MKTLVLVAVLGLASLYLLSYA) is a signal peptide. A propeptide spanning residues 22-50 (SEVQQLSVAEEEFGALIDAFGGLLETEER) is cleaved from the precursor. 3 cysteine pairs are disulfide-bonded: C57–C71, C64–C76, and C70–C86.

This sequence belongs to the neurotoxin 10 (Hwtx-1) family. 26 (ICK-1) subfamily. In terms of tissue distribution, expressed by the venom gland.

It is found in the secreted. Its function is as follows. Ion channel inhibitor. The sequence is that of U8-barytoxin-Tl1a from Trittame loki (Brush-footed trapdoor spider).